We begin with the raw amino-acid sequence, 715 residues long: Epidermal growth factor receptor kinase substrate 8-like protein 2 (715 aa).

The 157-residue stretch at 46–202 (MHETSQYHVQ…RQRQSILPPP (157 aa)) folds into the PID domain. Residues 183–243 (QTLKGHQEKI…GFRRRESQEE (61 aa)) form a disordered region. The span at 199–208 (LPPPQGPAPI) shows a compositional bias: pro residues. Basic and acidic residues-rich tracts occupy residues 213–222 (RGGDSPEAKN) and 234–243 (GFRRRESQEE). Ser-240 bears the Phosphoserine mark. Thr-303 is modified (phosphothreonine). Positions 448 to 487 (VSPVSRQSIRNSQKHSPTSEPTPPGDALPPVSSPHTHRGY) are disordered. The residue at position 449 (Ser-449) is a Phosphoserine. Positions 451–466 (VSRQSIRNSQKHSPTS) are enriched in polar residues. Thr-469 is modified (phosphothreonine). The 60-residue stretch at 492 to 551 (AMAKYVKILYDFTARNANELSVLKDEVLEVLEDGRQWWKLRSRSGQAGYVPCNILGEARP) folds into the SH3 domain. Position 570 is a phosphoserine (Ser-570).

It belongs to the EPS8 family. Interacts with ABI1. Part of a complex that contains SOS1, ABI1 and EPS8L2. Associates with F-actin. As to expression, detected in fibroblasts and placenta.

The protein resides in the cytoplasm. The protein localises to the cell projection. It is found in the stereocilium. In terms of biological role, stimulates guanine exchange activity of SOS1. May play a role in membrane ruffling and remodeling of the actin cytoskeleton. In the cochlea, is required for stereocilia maintenance in adult hair cells. This is Epidermal growth factor receptor kinase substrate 8-like protein 2 (EPS8L2) from Homo sapiens (Human).